We begin with the raw amino-acid sequence, 422 residues long: Steroid hormone receptor ERR1 (422 aa).

The tract at residues 1 to 66 (MSSQVVGIEP…EGAGSGEQGS (66 aa)) is disordered. Positions 1-76 (MSSQVVGIEP…GKLVLSSLPK (76 aa)) are repressor domain. A Glycyl lysine isopeptide (Lys-Gly) (interchain with G-Cter in SUMO) cross-link involves residue Lys14. 2 positions are modified to phosphoserine: Ser19 and Ser22. The nuclear receptor DNA-binding region spans 76-151 (KRLCLVCGDV…VGMLKEGVRL (76 aa)). 2 consecutive NR C4-type zinc fingers follow at residues 79-99 (CLVC…CEAC) and 115-134 (CPAS…CQAC). N6-acetyllysine; by PCAF/KAT2B occurs at positions 129, 138, 160, and 162. Lys189 participates in a covalent cross-link: Glycyl lysine isopeptide (Lys-Gly) (interchain with G-Cter in SUMO2). An NR LBD domain is found at 192-420 (PVNALVSHLL…KLFLEMLEAM (229 aa)). A Glycyl lysine isopeptide (Lys-Gly) (interchain with G-Cter in SUMO); alternate cross-link involves residue Lys402. Lys402 is covalently cross-linked (Glycyl lysine isopeptide (Lys-Gly) (interchain with G-Cter in SUMO2); alternate). Residues 402-422 (KLEGKVPMHKLFLEMLEAMMD) are AF-2 domain.

It belongs to the nuclear hormone receptor family. NR3 subfamily. Binds DNA as a monomer or a homodimer. Interacts (via the AF2 domain) with coactivator PPARGC1A (via the L3 motif); the interaction greatly enhances transcriptional activity of genes involved in energy metabolism. Interacts with PIAS4; the interaction enhances sumoylation. Interacts with MAPK15; promotes re-localization of ESRRA to the cytoplasm through a XPO1-dependent mechanism then inhibits ESRRA transcriptional activity. Post-translationally, phosphorylation on Ser-19 enhances sumoylation on Lys-14 increasing repression of transcriptional activity. Sumoylated with SUMO2. Main site is Lys-14 which is enhanced by phosphorylation on Ser-19, cofactor activation, and by interaction with PIAS4. Sumoylation enhances repression of transcriptional activity, but has no effect on subcellular location nor on DNA binding. In terms of processing, reversibly acetylated. Acetylation by PCAF/KAT2 at Lys-129, Lys-138, Lys-160 and Lys-162 and PCAF/KAT2 decreases transcriptional activity probably by inhibiting DNA-binding activity; deacetylation involves SIRT1 and HDAC8 and increases DNA-binding. In terms of tissue distribution, most highly expressed in kidney, heart, and brown adipocytes. Also found in uterus, cervix and vagina.

It is found in the nucleus. Its subcellular location is the cytoplasm. Binds to an ERR-alpha response element (ERRE) containing a single consensus half-site, 5'-TNAAGGTCA-3'. Can bind to the medium-chain acyl coenzyme A dehydrogenase (MCAD) response element NRRE-1 and may act as an important regulator of MCAD promoter. Binds to the C1 region of the lactoferrin gene promoter. Requires dimerization and the coactivator, PGC-1A, for full activity. The ERRalpha/PGC1alpha complex is a regulator of energy metabolism. Induces the expression of PERM1 in the skeletal muscle. In Mus musculus (Mouse), this protein is Steroid hormone receptor ERR1 (Esrra).